Here is a 225-residue protein sequence, read N- to C-terminus: Futalosine hydrolase (225 aa).

Belongs to the PNP/UDP phosphorylase family. Futalosine hydrolase subfamily. As to quaternary structure, homotetramer.

The catalysed reaction is futalosine + H2O = dehypoxanthine futalosine + hypoxanthine. It participates in quinol/quinone metabolism; menaquinone biosynthesis. Its activity is regulated as follows. No enhancing of inhibitory effects are observed with divalent metal ions. Slightly inhibited by hypoxanthine. In terms of biological role, catalyzes the hydrolysis of futalosine (FL) to dehypoxanthine futalosine (DHFL) and hypoxanthine, a step in the biosynthesis of menaquinone (MK, vitamin K2). Is highly specific to futalosine since it does not accept aminodeoxyfutalosine (AFL), or any structurally related nucleotides and nucleosides as substrate. This chain is Futalosine hydrolase, found in Thermus thermophilus (strain ATCC 27634 / DSM 579 / HB8).